The primary structure comprises 124 residues: Small ribosomal subunit protein uS12 (124 aa).

The disordered stretch occupies residues Met-1 to Lys-20. Over residues Arg-9–Lys-18 the composition is skewed to basic residues. 3-methylthioaspartic acid is present on Asp-89.

It belongs to the universal ribosomal protein uS12 family. In terms of assembly, part of the 30S ribosomal subunit. Contacts proteins S8 and S17. May interact with IF1 in the 30S initiation complex.

In terms of biological role, with S4 and S5 plays an important role in translational accuracy. Functionally, interacts with and stabilizes bases of the 16S rRNA that are involved in tRNA selection in the A site and with the mRNA backbone. Located at the interface of the 30S and 50S subunits, it traverses the body of the 30S subunit contacting proteins on the other side and probably holding the rRNA structure together. The combined cluster of proteins S8, S12 and S17 appears to hold together the shoulder and platform of the 30S subunit. The protein is Small ribosomal subunit protein uS12 of Clavibacter michiganensis subsp. michiganensis (strain NCPPB 382).